Here is a 156-residue protein sequence, read N- to C-terminus: MPRRRVAAKREIIPDPKFGSARLAKFINHVMESGKKSVAERIVYGALDIVAEKSKEEPIEMFEKALENIQPMVEVKSRRVGGATYQVPVEVRPSRQNALAMRWLVEYSRKRGEKSMAQRLAGEILDAADSKGAAVKKREDVHRMAEANKAFSHFRF.

The protein belongs to the universal ribosomal protein uS7 family. As to quaternary structure, part of the 30S ribosomal subunit. Contacts proteins S9 and S11.

Its function is as follows. One of the primary rRNA binding proteins, it binds directly to 16S rRNA where it nucleates assembly of the head domain of the 30S subunit. Is located at the subunit interface close to the decoding center, probably blocks exit of the E-site tRNA. This chain is Small ribosomal subunit protein uS7, found in Marinobacter nauticus (strain ATCC 700491 / DSM 11845 / VT8) (Marinobacter aquaeolei).